A 690-amino-acid polypeptide reads, in one-letter code: MACLGSLHPLGSLLLLFLLLLLSPEARGEYGLVRVVSKNWSKDYCVLYSSDYVNLPRDLHHAPLLSLHDGTKTPWCPDEDSFHQAQDSSPRQRPLHQTTTMVTRGNCSFYAKGWLAQDQGAQGLLIVSRARNQQCSDTISKPQDPSKPWPALTIPVAVLRYTDMLDIVSHTYGDTDVRVAMFAPLEPVTDYNMAIIFILAVGTVAAGGYWAGLMEANKLQRRQAQRGGGLGGHNQQQTVAAERSQRAWEDDDFEDAPMDFTPAMTGAVVTMSCSIMILLYFFYDCFVYVMIGIFSLGASTGLYSCLAPILCHLPLWRYQWVLPGQRVSVTWPLLLLAGLCAMVTVLWVIHRNEDHWAWLLQDTLGVAYCLFVLRRVRLPTFKNCTLFLLALLAFDVFFVFITPLFTKTGESIMVEVASGPADSSSHERLPMVLKVPRLSFSALTLCNQPFSILGFGDIVVPGFLVAYCHRFDMQVQSRQVYYMACTVAYAVGLLVTFVAMILMQMGQPALLYLVSSTLLTSLAVATCRQEFTLFWTGQGRAKIPAEPVAQPCIASAVGSKMKLEDAKDSRTTNRFEQAVDGESGDLESSTGDDMAEMVTLSEDEATSPEGHSESSEGWSDTNLDPNELPSGSPMALEAMLIPLIQPIPHPSELGHIRTQSRVHDSSLPWMGLHKRKGLKVKKSMSAQAPL.

The first 28 residues, 1 to 28 (MACLGSLHPLGSLLLLFLLLLLSPEARG), serve as a signal peptide directing secretion. Over 29–192 (EYGLVRVVSK…APLEPVTDYN (164 aa)) the chain is Lumenal. The PA domain occupies 87 to 166 (DSSPRQRPLH…AVLRYTDMLD (80 aa)). A glycan (N-linked (GlcNAc...) asparagine) is linked at N106. Residues 193 to 213 (MAIIFILAVGTVAAGGYWAGL) traverse the membrane as a helical segment. Residues 214-260 (MEANKLQRRQAQRGGGLGGHNQQQTVAAERSQRAWEDDDFEDAPMDF) are Cytoplasmic-facing. Residues 261 to 283 (TPAMTGAVVTMSCSIMILLYFFY) traverse the membrane as a helical segment. A topological domain (lumenal) is located at residue D284. Residues 285–307 (CFVYVMIGIFSLGASTGLYSCLA) form a helical membrane-spanning segment. Residues 308-328 (PILCHLPLWRYQWVLPGQRVS) are Cytoplasmic-facing. The chain crosses the membrane as a helical span at residues 329–349 (VTWPLLLLAGLCAMVTVLWVI). The Lumenal segment spans residues 350–354 (HRNED). A helical transmembrane segment spans residues 355–373 (HWAWLLQDTLGVAYCLFVL). Over 374–384 (RRVRLPTFKNC) the chain is Cytoplasmic. The chain crosses the membrane as a helical span at residues 385 to 405 (TLFLLALLAFDVFFVFITPLF). The active site involves D395. Residues 406–448 (TKTGESIMVEVASGPADSSSHERLPMVLKVPRLSFSALTLCNQ) lie on the Lumenal side of the membrane. Residues 449–469 (PFSILGFGDIVVPGFLVAYCH) traverse the membrane as a helical segment. D457 is an active-site residue. At 470–482 (RFDMQVQSRQVYY) the chain is on the cytoplasmic side. The helical transmembrane segment at 483–503 (MACTVAYAVGLLVTFVAMILM) threads the bilayer. Residue Q504 is a topological domain, lumenal. A helical transmembrane segment spans residues 505–525 (MGQPALLYLVSSTLLTSLAVA). A PAL motif is present at residues 508–510 (PAL). Residues 526–690 (TCRQEFTLFW…KKSMSAQAPL (165 aa)) lie on the Cytoplasmic side of the membrane. Residues 564-573 (EDAKDSRTTN) are compositionally biased toward basic and acidic residues. The segment at 564 to 633 (EDAKDSRTTN…DPNELPSGSP (70 aa)) is disordered. The segment covering 615 to 624 (SEGWSDTNLD) has biased composition (polar residues).

This sequence belongs to the peptidase A22B family. Interacts (via active sites) with FREY; the interaction stabilizes FREY1 protein and inhibits SPPL2C proteolytic activity. Post-translationally, glycosylated. In terms of tissue distribution, highly expressed in testis where it is primarily localised in spermatids (at protein level).

Its subcellular location is the endoplasmic reticulum membrane. Functionally, sperm-specific intramembrane-cleaving aspartic protease (I-CLiP) that cleaves distinct tail-anchored proteins and SNARE proteins. In elongated spermatids, modulates intracellular Ca(2+) homeostasis by controlling PLN abundance through proteolytic cleavage. During spermatogenesis, processes SNARE proteins and impacts vesicular trafficking which supports compartmental reorganization in maturating spermatids and may play a role in formation of the acrosome. Its function is as follows. In round spermatids, acts as a scaffold protein supporting FREY1 in IZUMO1 recruitment at the endoplasmic reticulum membrane and coordination of IZUMO1 complex assembly. Stabilizes FREY1 at the endoplasmic reticulum membrane through interaction. May recruit IZUMO1 interaction partners. No difference in cleavage specificity compared to isoform 1. The chain is Signal peptide peptidase-like 2C from Mus musculus (Mouse).